A 328-amino-acid chain; its full sequence is Eukaryotic translation initiation factor 3 subunit I (328 aa).

WD repeat units lie at residues 8–49 (GHER…GTYE), 50–89 (GHTG…QLYK), 145–184 (TRES…FVES), 189–228 (NSGS…VIKT), and 286–327 (GHFG…FKYT).

The protein belongs to the eIF-3 subunit I family. Component of the eukaryotic translation initiation factor 3 (eIF-3) complex. The eIF-3 complex appears to include tif32/eif3a, SPAC25G10.08/eif3b, tif33/eif3c, SPBC4C3.07/eif3f, tif35/eif3g and sum1/eif3i. This set of common subunits may also associate exclusively with either moe1/eif3d and int6/eif3e, or with SPAC821.05/eif3h and SPAC1751.03/eif3m. The eIF-3 complex may also include SPAC3A12.13c/eif3j.

It localises to the cytoplasm. The protein resides in the nucleus. Its function is as follows. Component of the eukaryotic translation initiation factor 3 (eIF-3) complex, which is involved in protein synthesis of a specialized repertoire of mRNAs and, together with other initiation factors, stimulates binding of mRNA and methionyl-tRNAi to the 40S ribosome. The eIF-3 complex specifically targets and initiates translation of a subset of mRNAs involved in cell proliferation. This chain is Eukaryotic translation initiation factor 3 subunit I (sum1), found in Schizosaccharomyces pombe (strain 972 / ATCC 24843) (Fission yeast).